The sequence spans 454 residues: Gustatory and odorant receptor 21a (454 aa).

The Cytoplasmic segment spans residues 1–114; the sequence is MTFLDRTMSF…LPRTGYSWGS (114 aa). The helical transmembrane segment at 115–135 threads the bilayer; the sequence is KQVMWAIFIYSCQTTIVVLVL. The Extracellular portion of the chain corresponds to 136 to 153; the sequence is RERVKKFVTSPDKRFDEA. Residues 154 to 174 traverse the membrane as a helical segment; the sequence is IYNVIFISLLFTNFLLPVASW. The Cytoplasmic portion of the chain corresponds to 175-206; that stretch reads RHGPQVAIFKNMWTNYQYKFFKTTGSPIVFPN. A helical transmembrane segment spans residues 207–227; it reads LYPLTWSLCVFSWLLSIAINL. The Extracellular segment spans residues 228–237; the sequence is SQYFLQPDFR. The helical transmembrane segment at 238 to 258 threads the bilayer; sequence LWYTFAYYPIIAMLNCFCSLW. Topologically, residues 259–312 are cytoplasmic; the sequence is YINCNAFGTASRALSDALQTTIRGEKPAQKLTEYRHLWVDLSHMMQQLGRAYSN. A helical transmembrane segment spans residues 313 to 333; that stretch reads MYGMYCLVIFFTTIIATYGSI. The Extracellular portion of the chain corresponds to 334–345; the sequence is SEIIDHGATYKE. A helical membrane pass occupies residues 346–366; that stretch reads VGLFVIVFYCMGLLYIICNEA. The Cytoplasmic portion of the chain corresponds to 367–422; it reads HYASRKVGLDFQTKLLNINLTAVDAATQKEVEMLLVAINKNPPIMNLDGYANINRE. A helical transmembrane segment spans residues 423–443; it reads LITTNISFMATYLVVLLQFKI. Topologically, residues 444-454 are extracellular; the sequence is TEQRRIGQQQA.

This sequence belongs to the insect chemoreceptor superfamily. Gustatory receptor (GR) family. Gr21a subfamily. In terms of assembly, gr21a and Gr63a probably form a heterodimer that responds to CO(2). In terms of tissue distribution, expressed in the adult labellar chemosensory neurons. Carbon dioxide-responsive neurons coexpress Gr21a and Gr63a in a pair of chemosensory receptors at both larval and adult life stages. A single bilateral neuron, expressing the Gr21a receptor, is responsible for CO(2) detection in larvae.

It localises to the cell membrane. Gustatory and odorant receptor which mediates acceptance or avoidance behavior, depending on its substrates. Gr21a and Gr63a together are sufficient for carbon dioxide detection and avoidance behavior. It is possible that the CO(2) receptors Gr63a and Gr21a activate the TRPC channels through Galpha49B and Plc21C. This innate olfactory avoidance behavior can be inhibited by inhibitory interactions of the odors such as 1-hexanol and 2,3-butanedione with Gr21a and Gr63a. In Drosophila melanogaster (Fruit fly), this protein is Gustatory and odorant receptor 21a (Gr21a).